The chain runs to 497 residues: Probable gamma-aminobutyrate transaminase 2, mitochondrial (497 aa).

Residues 1 to 37 constitute a mitochondrion transit peptide; that stretch reads MNLIKHAAFAASFQGETDCTSHASARKFSTSGSSPLL. 153-154 is a pyridoxal 5'-phosphate binding site; it reads GS. Tyr186 provides a ligand contact to substrate. Asp293 is a binding site for pyridoxal 5'-phosphate. Residue Lys322 participates in substrate binding. At Lys322 the chain carries N6-(pyridoxal phosphate)lysine.

The protein belongs to the class-III pyridoxal-phosphate-dependent aminotransferase family.

It localises to the mitochondrion. The catalysed reaction is 4-aminobutanoate + pyruvate = succinate semialdehyde + L-alanine. The enzyme catalyses 4-aminobutanoate + glyoxylate = succinate semialdehyde + glycine. Transaminase that degrades gamma-amino butyric acid (GABA). This chain is Probable gamma-aminobutyrate transaminase 2, mitochondrial, found in Oryza sativa subsp. indica (Rice).